Reading from the N-terminus, the 138-residue chain is Glia maturation factor (138 aa).

Residues 3 to 138 (DNQICDISNE…TEEWLKAKLK (136 aa)) enclose the ADF-H domain.

The protein belongs to the actin-binding proteins ADF family. GMF subfamily. In terms of tissue distribution, in ovaries, expressed in follicular epithelium, in polar cells, migrating border cells, and centripedal cells (at protein level).

The protein resides in the cell projection. The protein localises to the lamellipodium. Its subcellular location is the cytoplasm. It is found in the perinuclear region. It localises to the nucleus. The protein resides in the cell cortex. Its function is as follows. Inhibits Arp2/3-mediated actin nucleation. Together with flr, promotes Arp2/3-nucleated actin filament array disassembly. Promotes debranching. Regulates lamellipodial protrusion dynamics possibly by facilitating lamellipodial retraction. In egg chambers, enhances the retraction dynamics of cellular extensions in border cells and thus together with flr plays an important role in directional migration of border cell clusters. The polypeptide is Glia maturation factor (Drosophila melanogaster (Fruit fly)).